The sequence spans 426 residues: UDP-N-acetylglucosamine 1-carboxyvinyltransferase 2 (426 aa).

22–23 (KN) provides a ligand contact to phosphoenolpyruvate. R92 is a binding site for UDP-N-acetyl-alpha-D-glucosamine. Catalysis depends on D116, which acts as the Proton donor. UDP-N-acetyl-alpha-D-glucosamine is bound by residues 121–125 (RPIDQ), D307, and I329.

It belongs to the EPSP synthase family. MurA subfamily.

It is found in the cytoplasm. It catalyses the reaction phosphoenolpyruvate + UDP-N-acetyl-alpha-D-glucosamine = UDP-N-acetyl-3-O-(1-carboxyvinyl)-alpha-D-glucosamine + phosphate. It participates in cell wall biogenesis; peptidoglycan biosynthesis. Functionally, cell wall formation. Adds enolpyruvyl to UDP-N-acetylglucosamine. This is UDP-N-acetylglucosamine 1-carboxyvinyltransferase 2 from Lactiplantibacillus plantarum (strain ATCC BAA-793 / NCIMB 8826 / WCFS1) (Lactobacillus plantarum).